The chain runs to 347 residues: Quinolinate synthase (347 aa).

The iminosuccinate site is built by H47 and S68. C113 serves as a coordination point for [4Fe-4S] cluster. Residues 139-141 and S156 contribute to the iminosuccinate site; that span reads YAN. Residue C200 participates in [4Fe-4S] cluster binding. Residues 226–228 and T243 each bind iminosuccinate; that span reads HPE. C297 contacts [4Fe-4S] cluster.

This sequence belongs to the quinolinate synthase family. Type 1 subfamily. [4Fe-4S] cluster is required as a cofactor.

It is found in the cytoplasm. It catalyses the reaction iminosuccinate + dihydroxyacetone phosphate = quinolinate + phosphate + 2 H2O + H(+). It functions in the pathway cofactor biosynthesis; NAD(+) biosynthesis; quinolinate from iminoaspartate: step 1/1. Its function is as follows. Catalyzes the condensation of iminoaspartate with dihydroxyacetone phosphate to form quinolinate. This chain is Quinolinate synthase, found in Escherichia coli O157:H7.